Here is a 425-residue protein sequence, read N- to C-terminus: Enolase (425 aa).

Gln-164 serves as a coordination point for (2R)-2-phosphoglycerate. Glu-208 functions as the Proton donor in the catalytic mechanism. Mg(2+) is bound by residues Asp-243, Glu-286, and Asp-312. (2R)-2-phosphoglycerate is bound by residues Lys-337, Arg-366, Ser-367, and Lys-388. Catalysis depends on Lys-337, which acts as the Proton acceptor.

It belongs to the enolase family. The cofactor is Mg(2+).

Its subcellular location is the cytoplasm. It is found in the secreted. The protein localises to the cell surface. It carries out the reaction (2R)-2-phosphoglycerate = phosphoenolpyruvate + H2O. It functions in the pathway carbohydrate degradation; glycolysis; pyruvate from D-glyceraldehyde 3-phosphate: step 4/5. Functionally, catalyzes the reversible conversion of 2-phosphoglycerate (2-PG) into phosphoenolpyruvate (PEP). It is essential for the degradation of carbohydrates via glycolysis. This chain is Enolase, found in Methanococcus aeolicus (strain ATCC BAA-1280 / DSM 17508 / OCM 812 / Nankai-3).